The sequence spans 90 residues: DNA-binding protein HU-beta (90 aa).

The protein belongs to the bacterial histone-like protein family. As to quaternary structure, heterodimer of an alpha and a beta chain.

Functionally, histone-like DNA-binding protein which is capable of wrapping DNA to stabilize it, and thus to prevent its denaturation under extreme environmental conditions. The polypeptide is DNA-binding protein HU-beta (hupB) (Pseudomonas fluorescens (strain ATCC BAA-477 / NRRL B-23932 / Pf-5)).